A 546-amino-acid polypeptide reads, in one-letter code: CTP synthase (546 aa).

Positions 1-266 are amidoligase domain; sequence MTTNYIFVTG…DDLVCTRFGI (266 aa). A CTP-binding site is contributed by Ser-14. UTP is bound at residue Ser-14. Residues 15–20 and Asp-72 each bind ATP; that span reads SLGKGI. 2 residues coordinate Mg(2+): Asp-72 and Glu-140. CTP is bound by residues 147 to 149, 187 to 192, and Lys-223; these read DIE and KTKPTQ. Residues 187–192 and Lys-223 contribute to the UTP site; that span reads KTKPTQ. 239–241 is a binding site for ATP; the sequence is KDV. Positions 291–542 constitute a Glutamine amidotransferase type-1 domain; sequence TIGMVGKYIE…VKAAGQYSRG (252 aa). Residue Gly-352 participates in L-glutamine binding. Residue Cys-379 is the Nucleophile; for glutamine hydrolysis of the active site. L-glutamine is bound by residues 380–383, Glu-403, and Arg-470; that span reads LGMQ. Active-site residues include His-515 and Glu-517.

The protein belongs to the CTP synthase family. As to quaternary structure, homotetramer.

It carries out the reaction UTP + L-glutamine + ATP + H2O = CTP + L-glutamate + ADP + phosphate + 2 H(+). It catalyses the reaction L-glutamine + H2O = L-glutamate + NH4(+). The enzyme catalyses UTP + NH4(+) + ATP = CTP + ADP + phosphate + 2 H(+). It participates in pyrimidine metabolism; CTP biosynthesis via de novo pathway; CTP from UDP: step 2/2. With respect to regulation, allosterically activated by GTP, when glutamine is the substrate; GTP has no effect on the reaction when ammonia is the substrate. The allosteric effector GTP functions by stabilizing the protein conformation that binds the tetrahedral intermediate(s) formed during glutamine hydrolysis. Inhibited by the product CTP, via allosteric rather than competitive inhibition. Its function is as follows. Catalyzes the ATP-dependent amination of UTP to CTP with either L-glutamine or ammonia as the source of nitrogen. Regulates intracellular CTP levels through interactions with the four ribonucleotide triphosphates. The sequence is that of CTP synthase from Vibrio parahaemolyticus serotype O3:K6 (strain RIMD 2210633).